Reading from the N-terminus, the 74-residue chain is MSKIQYPMTTAAIFDDVVYPLHFDNAGKVRQEMEGAVNWFCRWCNEEKAAVKARLLVSCWGQYLSHEQVIREAA.

The protein is Putative protein ninY (ninY) of Salmonella phage P22 (Bacteriophage P22).